A 128-amino-acid polypeptide reads, in one-letter code: Small ribosomal subunit protein bS16 (128 aa).

A disordered region spans residues 107-128 (AAEAKAAAANESDDSGTDSTES). A compositionally biased stretch (acidic residues) spans 117 to 128 (ESDDSGTDSTES).

The protein belongs to the bacterial ribosomal protein bS16 family.

The protein is Small ribosomal subunit protein bS16 of Synechococcus sp. (strain CC9311).